The sequence spans 290 residues: Probable branched-chain-amino-acid aminotransferase (290 aa).

Residue K155 is modified to N6-(pyridoxal phosphate)lysine.

It belongs to the class-IV pyridoxal-phosphate-dependent aminotransferase family. Pyridoxal 5'-phosphate is required as a cofactor.

The catalysed reaction is L-leucine + 2-oxoglutarate = 4-methyl-2-oxopentanoate + L-glutamate. The enzyme catalyses L-isoleucine + 2-oxoglutarate = (S)-3-methyl-2-oxopentanoate + L-glutamate. It carries out the reaction L-valine + 2-oxoglutarate = 3-methyl-2-oxobutanoate + L-glutamate. Its pathway is amino-acid biosynthesis; L-isoleucine biosynthesis; L-isoleucine from 2-oxobutanoate: step 4/4. It participates in amino-acid biosynthesis; L-leucine biosynthesis; L-leucine from 3-methyl-2-oxobutanoate: step 4/4. The protein operates within amino-acid biosynthesis; L-valine biosynthesis; L-valine from pyruvate: step 4/4. In terms of biological role, acts on leucine, isoleucine and valine. The sequence is that of Probable branched-chain-amino-acid aminotransferase (ilvE) from Rickettsia conorii (strain ATCC VR-613 / Malish 7).